The sequence spans 217 residues: Large ribosomal subunit protein uL1 (217 aa).

The protein belongs to the universal ribosomal protein uL1 family.

The protein is Large ribosomal subunit protein uL1 (RpL10Ab) of Drosophila melanogaster (Fruit fly).